A 418-amino-acid chain; its full sequence is AP-3 complex subunit mu-1 (418 aa).

The MHD domain occupies 176–417; sequence NNEAYFDVVE…ITKAGKFQVR (242 aa).

It belongs to the adaptor complexes medium subunit family. As to quaternary structure, adaptor protein complex 3 (AP-3) is a heterotetramer composed of two large adaptins (delta-type subunit AP3D1 and beta-type subunit AP3B1 or AP3B2), a medium adaptin (mu-type subunit AP3M1 or AP3M2) and a small adaptin (sigma-type subunit APS1 or AP3S2). Interacts with AGAP1. AP-3 associates with the BLOC-1 complex.

It is found in the golgi apparatus. It localises to the cytoplasmic vesicle membrane. In terms of biological role, part of the AP-3 complex, an adaptor-related complex which is not clathrin-associated. The complex is associated with the Golgi region as well as more peripheral structures. It facilitates the budding of vesicles from the Golgi membrane and may be directly involved in trafficking to lysosomes. In concert with the BLOC-1 complex, AP-3 is required to target cargos into vesicles assembled at cell bodies for delivery into neurites and nerve terminals. This is AP-3 complex subunit mu-1 (Ap3m1) from Rattus norvegicus (Rat).